The chain runs to 56 residues: uncharacterized protein (56 aa).

Basic residues predominate over residues 21–38; it reads HTHTPHPHHTHTHTHHTP. Positions 21-40 are disordered; sequence HTHTPHPHHTHTHTHHTPTH.

This is an uncharacterized protein from Saccharomyces cerevisiae (strain ATCC 204508 / S288c) (Baker's yeast).